The following is a 161-amino-acid chain: Eukaryotic translation initiation factor 5A-2 (161 aa).

At Lys54 the chain carries Hypusine.

It belongs to the eIF-5A family. Post-translationally, lys-54 undergoes hypusination, a unique post-translational modification that consists in the addition of a butylamino group from spermidine to lysine side chain and leads to the formation of a hypusine residue. eIF-5As are the only known proteins to undergo this modification, which is essential for their function. As to expression, expressed in the somatic tissues.

The protein resides in the cytoplasm. Its function is as follows. Translation factor that promotes translation elongation and termination, particularly upon ribosome stalling at specific amino acid sequence contexts. Binds between the exit (E) and peptidyl (P) site of the ribosome and promotes rescue of stalled ribosome: specifically required for efficient translation of polyproline-containing peptides as well as other motifs that stall the ribosome. Acts as a ribosome quality control (RQC) cofactor by joining the RQC complex to facilitate peptidyl transfer during CAT tailing step. Acts in somatic tissues and its function in the soma is essential for normal growth and reproduction. This chain is Eukaryotic translation initiation factor 5A-2 (iff-2), found in Caenorhabditis elegans.